An 867-amino-acid polypeptide reads, in one-letter code: Putative tyrosine-protein kinase F09A5.2 (867 aa).

Helical transmembrane passes span 45–65 (VMKI…FATS) and 355–375 (LLLI…AFFV). 2 N-linked (GlcNAc...) asparagine glycosylation sites follow: Asn395 and Asn423. In terms of domain architecture, Protein kinase spans 467–757 (VQEDHLLGNG…FNEMRGEITV (291 aa)). 473 to 481 (LGNGAFANV) contributes to the ATP binding site. Asn496 and Asn500 each carry an N-linked (GlcNAc...) asparagine glycan. An ATP-binding site is contributed by Lys516. A glycan (N-linked (GlcNAc...) asparagine) is linked at Asn585. Catalysis depends on Asp626, which acts as the Proton acceptor. Disordered stretches follow at residues 782-821 (LTMQ…GTCA) and 848-867 (SKSM…TYQS). The span at 801–810 (DMDEDGDYDS) shows a compositional bias: acidic residues. The span at 858-867 (SNSTVSTYQS) shows a compositional bias: polar residues. N-linked (GlcNAc...) asparagine glycosylation is present at Asn859.

The protein belongs to the protein kinase superfamily. Tyr protein kinase family.

It is found in the membrane. The enzyme catalyses L-tyrosyl-[protein] + ATP = O-phospho-L-tyrosyl-[protein] + ADP + H(+). The chain is Putative tyrosine-protein kinase F09A5.2 from Caenorhabditis elegans.